We begin with the raw amino-acid sequence, 426 residues long: Serine--tRNA ligase (426 aa).

Residue 227–229 (TSE) coordinates L-serine. ATP contacts are provided by residues 258-260 (RKE) and Val-274. Glu-281 lines the L-serine pocket. Residue 345-348 (ELTS) coordinates ATP. Thr-380 is a binding site for L-serine.

It belongs to the class-II aminoacyl-tRNA synthetase family. Type-1 seryl-tRNA synthetase subfamily. In terms of assembly, homodimer. The tRNA molecule binds across the dimer.

The protein resides in the cytoplasm. It carries out the reaction tRNA(Ser) + L-serine + ATP = L-seryl-tRNA(Ser) + AMP + diphosphate + H(+). The catalysed reaction is tRNA(Sec) + L-serine + ATP = L-seryl-tRNA(Sec) + AMP + diphosphate + H(+). Its pathway is aminoacyl-tRNA biosynthesis; selenocysteinyl-tRNA(Sec) biosynthesis; L-seryl-tRNA(Sec) from L-serine and tRNA(Sec): step 1/1. In terms of biological role, catalyzes the attachment of serine to tRNA(Ser). Is also able to aminoacylate tRNA(Sec) with serine, to form the misacylated tRNA L-seryl-tRNA(Sec), which will be further converted into selenocysteinyl-tRNA(Sec). This Clavibacter michiganensis subsp. michiganensis (strain NCPPB 382) protein is Serine--tRNA ligase.